The sequence spans 267 residues: Small ribosomal subunit protein uS2 (267 aa).

The tract at residues 237-267 (IGESAAAPSEPALETASAEATAEGEQPGSQA) is disordered. The span at 238 to 261 (GESAAAPSEPALETASAEATAEGE) shows a compositional bias: low complexity.

This sequence belongs to the universal ribosomal protein uS2 family.

This Chelativorans sp. (strain BNC1) protein is Small ribosomal subunit protein uS2.